The primary structure comprises 494 residues: MGTTKVTAPLIFAISVATIGSFQFGYNTGVINAPEAIIKDFLNYTLEERSEPPPSSVLLTSLWSLSVAIFSVGGMIGSFSVGLFVNRFGRGNSMLIVNLLAIAGGCLMGFCKIAESVEMLILGRLIIGLFCGLCTGFVPMYIGEISPTALRGAFGTLNQLGIVIGILVAQIFGLKVILGTEDLWPLLLGFTILPAIIQCAALPFCPESPRFLLINRKEEEKAKEILQRLWGTEDVAQDIQEMKDESMRMSQEKQVTVLELFRAPNYRQPIIISIMLQLSQQLSGINAVFYYSTGIFKDAGVQEPVYATIGAGVVNTIFTVVSVFLVERAGRRTLHLIGLGGMAFCSILMTISLLLKDNYSWMSFICIGAILVFVAFFEIGPGPIPWFIVAELFGQGPRPAAMAVAGCSNWTSNFLVGLLFPSAAFYLGAYVFIVFTVFLVIFWVFTFFKVPETRGRTFEEITRAFEGQTQTGTRGEKGPIMEMNSIQPTKDTNA.

The Cytoplasmic portion of the chain corresponds to 1 to 10 (MGTTKVTAPL). A helical transmembrane segment spans residues 11–32 (IFAISVATIGSFQFGYNTGVIN). Over 33–64 (APEAIIKDFLNYTLEERSEPPPSSVLLTSLWS) the chain is Extracellular. Asn-43 carries an N-linked (GlcNAc...) asparagine glycan. Residues 65 to 85 (LSVAIFSVGGMIGSFSVGLFV) form a helical membrane-spanning segment. Residues 86–90 (NRFGR) lie on the Cytoplasmic side of the membrane. The helical transmembrane segment at 91–111 (GNSMLIVNLLAIAGGCLMGFC) threads the bilayer. Residues 112 to 118 (KIAESVE) are Extracellular-facing. Residues 119-142 (MLILGRLIIGLFCGLCTGFVPMYI) traverse the membrane as a helical segment. Residues 143–153 (GEISPTALRGA) lie on the Cytoplasmic side of the membrane. A helical transmembrane segment spans residues 154 to 174 (FGTLNQLGIVIGILVAQIFGL). Gln-159 is a D-glucose binding site. Residues 175–183 (KVILGTEDL) are Extracellular-facing. The helical transmembrane segment at 184–204 (WPLLLGFTILPAIIQCAALPF) threads the bilayer. At 205–269 (CPESPRFLLI…LFRAPNYRQP (65 aa)) the chain is on the cytoplasmic side. Thr-232 is subject to Phosphothreonine. The chain crosses the membrane as a helical span at residues 270–290 (IIISIMLQLSQQLSGINAVFY). The important for selectivity against fructose stretch occupies residues 277–279 (QLS). Residues 280 to 281 (QQ) and Asn-286 contribute to the D-glucose site. At 291–304 (YSTGIFKDAGVQEP) the chain is on the extracellular side. Residues 305–325 (VYATIGAGVVNTIFTVVSVFL) form a helical membrane-spanning segment. Asn-315 contributes to the D-glucose binding site. At 326 to 331 (VERAGR) the chain is on the cytoplasmic side. A helical membrane pass occupies residues 332–352 (RTLHLIGLGGMAFCSILMTIS). The Extracellular segment spans residues 353–363 (LLLKDNYSWMS). N-linked (GlcNAc...) asparagine glycosylation occurs at Asn-358. The chain crosses the membrane as a helical span at residues 364–389 (FICIGAILVFVAFFEIGPGPIPWFIV). The D-glucose site is built by Glu-378 and Trp-386. The Cytoplasmic segment spans residues 390-399 (AELFGQGPRP). A helical membrane pass occupies residues 400–420 (AAMAVAGCSNWTSNFLVGLLF). Topologically, residues 421-429 (PSAAFYLGA) are extracellular. A helical transmembrane segment spans residues 430-450 (YVFIVFTVFLVIFWVFTFFKV). Residues 451 to 494 (PETRGRTFEEITRAFEGQTQTGTRGEKGPIMEMNSIQPTKDTNA) are Cytoplasmic-facing. Positions 469-494 (TQTGTRGEKGPIMEMNSIQPTKDTNA) are disordered. Over residues 484–494 (NSIQPTKDTNA) the composition is skewed to polar residues. The residue at position 485 (Ser-485) is a Phosphoserine. The residue at position 492 (Thr-492) is a Phosphothreonine.

It belongs to the major facilitator superfamily. Sugar transporter (TC 2.A.1.1) family. Glucose transporter subfamily. Interacts with SMIM43; the interaction may promote SLC2A1-mediated glucose transport to meet the energy needs of mesendoderm differentiation.

It is found in the cell membrane. Its subcellular location is the perikaryon. It localises to the cell projection. The enzyme catalyses D-glucose(out) = D-glucose(in). It catalyses the reaction D-galactose(in) = D-galactose(out). With respect to regulation, deoxyglucose transport is inhibited by D-glucose, D-galactose and maltose. Galactose transport is inhibited by D-glucose and maltose. Functionally, facilitative glucose transporter. Can also mediate the uptake of various other monosaccharides across the cell membrane. Mediates the uptake of glucose, 2-deoxyglucose, galactose, mannose, xylose and fucose, and probably also dehydroascorbate. Does not mediate fructose transport. Required for mesendoderm differentiation. The sequence is that of Solute carrier family 2, facilitated glucose transporter member 3 from Bos taurus (Bovine).